A 119-amino-acid chain; its full sequence is Large ribosomal subunit protein uL18 (119 aa).

This sequence belongs to the universal ribosomal protein uL18 family. In terms of assembly, part of the 50S ribosomal subunit; part of the 5S rRNA/L5/L18/L25 subcomplex. Contacts the 5S and 23S rRNAs.

Its function is as follows. This is one of the proteins that bind and probably mediate the attachment of the 5S RNA into the large ribosomal subunit, where it forms part of the central protuberance. This chain is Large ribosomal subunit protein uL18, found in Mycoplasmoides gallisepticum (strain R(low / passage 15 / clone 2)) (Mycoplasma gallisepticum).